Here is a 60-residue protein sequence, read N- to C-terminus: Sperm protamine P1 (60 aa).

Residues 1–60 (MARYRHSRSRSRSRYQRRRRRRSRYRSQRRRYRRRRGSRRRRRRGRRRGYRRRYSRRRRY) form a disordered region.

Belongs to the protamine P1 family. Testis.

It is found in the nucleus. It localises to the chromosome. Functionally, protamines substitute for histones in the chromatin of sperm during the haploid phase of spermatogenesis. They compact sperm DNA into a highly condensed, stable and inactive complex. The sequence is that of Sperm protamine P1 (PRM1) from Phascolarctos cinereus (Koala).